The sequence spans 134 residues: STAG3-like protein 3 (134 aa).

An SCD domain is found at 10–95 (PKVTCRDVLP…GCFKDWMVSM (86 aa)).

Belongs to the SCC3 family.

It localises to the nucleus. The chain is STAG3-like protein 3 (STAG3L3) from Homo sapiens (Human).